The following is a 925-amino-acid chain: Isoleucine--tRNA ligase (925 aa).

The 'HIGH' region motif lies at 57–67 (PYANGDIHIGH). Glu-553 contributes to the L-isoleucyl-5'-AMP binding site. Residues 594–598 (KMSKS) carry the 'KMSKS' region motif. Residue Lys-597 coordinates ATP. Residues Cys-889, Cys-892, Cys-909, and Cys-912 each coordinate Zn(2+).

It belongs to the class-I aminoacyl-tRNA synthetase family. IleS type 1 subfamily. In terms of assembly, monomer. Requires Zn(2+) as cofactor.

The protein resides in the cytoplasm. The enzyme catalyses tRNA(Ile) + L-isoleucine + ATP = L-isoleucyl-tRNA(Ile) + AMP + diphosphate. In terms of biological role, catalyzes the attachment of isoleucine to tRNA(Ile). As IleRS can inadvertently accommodate and process structurally similar amino acids such as valine, to avoid such errors it has two additional distinct tRNA(Ile)-dependent editing activities. One activity is designated as 'pretransfer' editing and involves the hydrolysis of activated Val-AMP. The other activity is designated 'posttransfer' editing and involves deacylation of mischarged Val-tRNA(Ile). This Brevibacillus brevis (strain 47 / JCM 6285 / NBRC 100599) protein is Isoleucine--tRNA ligase.